The sequence spans 119 residues: UPF0344 protein lp_1373 (119 aa).

4 consecutive transmembrane segments (helical) span residues 1-21, 32-52, 60-80, and 92-112; these read MYLL…AIGL, FLIL…ALAI, WLTL…EVAF, and LVTL…GLHW.

Belongs to the UPF0344 family.

It localises to the cell membrane. This is UPF0344 protein lp_1373 from Lactiplantibacillus plantarum (strain ATCC BAA-793 / NCIMB 8826 / WCFS1) (Lactobacillus plantarum).